The chain runs to 1074 residues: DNA helicase B (1074 aa).

Disordered regions lie at residues 1–38, 380–420, and 932–1014; these read MARQDRLRELLGPLHPYKSDDEEEDCAQEEEGEQEEEF, GAKP…HVRS, and GSCA…FDEE. Acidic residues predominate over residues 20-38; sequence DDEEEDCAQEEEGEQEEEF. The span at 934-946 shows a compositional bias: polar residues; it reads CAPSTGFASQPSS. A phosphoserine mark is found at serine 942 and serine 946. The residue at position 992 (threonine 992) is a Phosphothreonine. Residues serine 1015 and serine 1026 each carry the phosphoserine modification. The short motif at 1022 to 1046 is the Nuclear export signal element; it reads VEAPSPQVSSVFQNMRLNTLTPRQL. A disordered region spans residues 1040-1074; it reads TLTPRQLFKPTDNQDTGTAGVADDANDPSNQEMEM.

Belongs to the RecD family. HELB subfamily. Binds to RPA1; this interaction promotes HELB recruitment to chromatin following DNA damage. Interacts with at least two subunits of the DNA polymerase alpha complex. Interacts with CDC45. Interacts with TOPB1. Post-translationally, phosphorylated at Ser-942 by CDK2 during the G1/S transition, resulting in its nuclear export into the cytoplasm. As S phase progresses, its exclusion from the nucleus promotes the activation of long-range resection.

It is found in the nucleus. The protein localises to the cytoplasm. Its subcellular location is the chromosome. The enzyme catalyses ATP + H2O = ADP + phosphate + H(+). Functionally, 5'-3' DNA helicase involved in DNA damage response by acting as an inhibitor of DNA end resection. Recruitment to single-stranded DNA (ssDNA) following DNA damage leads to inhibit the nucleases catalyzing resection, such as EXO1, BLM and DNA2, possibly via the 5'-3' ssDNA translocase activity of HELB. As cells approach S phase, DNA end resection is promoted by the nuclear export of HELB following phosphorylation. Acts independently of TP53BP1. Unwinds duplex DNA with 5'-3' polarity. Has single-strand DNA-dependent ATPase and DNA helicase activities. Prefers ATP and dATP as substrates. During S phase, may facilitate cellular recovery from replication stress. The chain is DNA helicase B from Mus musculus (Mouse).